The following is a 552-amino-acid chain: Urocanate hydratase (552 aa).

Residues 49 to 50, Gln127, 173 to 175, Asp193, 239 to 240, 260 to 264, 270 to 271, and Tyr319 each bind NAD(+); these read GG, GMG, NA, QTSAH, and YI. Cys407 is an active-site residue. Residue Gly489 coordinates NAD(+).

The protein belongs to the urocanase family. It depends on NAD(+) as a cofactor.

It is found in the cytoplasm. The catalysed reaction is 4-imidazolone-5-propanoate = trans-urocanate + H2O. Its pathway is amino-acid degradation; L-histidine degradation into L-glutamate; N-formimidoyl-L-glutamate from L-histidine: step 2/3. In terms of biological role, catalyzes the conversion of urocanate to 4-imidazolone-5-propionate. This is Urocanate hydratase from Bacillus cereus (strain AH820).